Here is a 271-residue protein sequence, read N- to C-terminus: Nus factor SuhB (271 aa).

Glu-67, Asp-86, and Leu-88 together coordinate Mg(2+). Glu-67 contributes to the substrate binding site. Substrate contacts are provided by residues 88 to 91 (LDGT), Arg-187, and Asp-216.

Belongs to the inositol monophosphatase superfamily. Homodimer. The rRNA transcription and antitermination complex (rrnTAC) consists of RNA polymerase (RNAP), NusA, NusB, NusE (rpsJ), NusG, SubB, ribosomal protein S4, DNA and precursor rRNA; S4 is more flexible than other subunits. Interacts with the ribosome and with RNA polymerase. Mg(2+) serves as cofactor.

It localises to the cytoplasm. The enzyme catalyses a myo-inositol phosphate + H2O = myo-inositol + phosphate. In terms of biological role, part of the processive rRNA transcription and antitermination complex (rrnTAC). The complex forms an RNA-chaperone ring around the RNA exit tunnel of RNA polymerase (RNAP). It supports rapid transcription and antitermination of rRNA operons, cotranscriptional rRNA folding, and annealing of distal rRNA regions to allow correct ribosome biogenesis. This subunit may play a central role in organizing the structure. Functionally, a ribosome-associated protein, deletion of which alters the expression of 494 genes, suggesting a role in global gene regulation. Involved in control of pathogenesis-related genes. Required for the activation of virulence factors associated with acute infections (type 3 secretion system, T3SS) while suppressing virulence factors associated with chronic infections (biofilm formation and type 6 secretion system, T6SS). It probably acts at a post-transcriptional level. In Pseudomonas aeruginosa (strain ATCC 15692 / DSM 22644 / CIP 104116 / JCM 14847 / LMG 12228 / 1C / PRS 101 / PAO1), this protein is Nus factor SuhB.